Consider the following 53-residue polypeptide: U1-poneritoxin-Dq5a (53 aa).

A signal peptide spans 1 to 23 (MNIRLMFTLIALLVLTVSFSGAN). Disulfide bonds link C25-C42, C32-C47, and C41-C52.

In terms of tissue distribution, expressed by the venom gland.

The protein localises to the secreted. Its function is as follows. May have neurotoxic activity. The polypeptide is U1-poneritoxin-Dq5a (Dinoponera quadriceps (South American ant)).